The chain runs to 206 residues: Guanylate kinase (206 aa).

The Guanylate kinase-like domain occupies 5–183 (GNLFVVAAPS…AVFDLKTIVH (179 aa)). 12–19 (APSGAGKS) contacts ATP.

This sequence belongs to the guanylate kinase family.

Its subcellular location is the cytoplasm. The enzyme catalyses GMP + ATP = GDP + ADP. Its function is as follows. Essential for recycling GMP and indirectly, cGMP. This Polaromonas sp. (strain JS666 / ATCC BAA-500) protein is Guanylate kinase.